The chain runs to 336 residues: MLSYAPENAYQRASTMENKKVFPKEKSGLHPRNRHRSRYDFDALSVSCPELIPFLAPTAYGDISVDFADPLAVKMLNKALLKHFYGIEYWDIPADSLCPPIPGRADYVHHLADLLASCNGEVIPKGKNIALLDIGVGANCIYPIIGQREYGWRFTGTDIDSHALSAAKMVVSMNPTLKNTLRLKQQKDPHAIFEGVWAVNERYDATLCNPPFHGSAEEAAATTRRKLHKLGKNEVAAKPVQNFGGKNSELWCEGGEEGFVSRMVAESVAKAQNCFWFTSLISKKTTLPAIYHALRYVKAVEVRTIEMAQGQKVSRFVAWTFLTPEQQAAWVAERWA.

It belongs to the methyltransferase superfamily. METTL16/RlmF family.

The protein resides in the cytoplasm. The catalysed reaction is adenosine(1618) in 23S rRNA + S-adenosyl-L-methionine = N(6)-methyladenosine(1618) in 23S rRNA + S-adenosyl-L-homocysteine + H(+). Specifically methylates the adenine in position 1618 of 23S rRNA. The chain is Ribosomal RNA large subunit methyltransferase F from Yersinia pseudotuberculosis serotype I (strain IP32953).